We begin with the raw amino-acid sequence, 224 residues long: Ribonuclease HII (224 aa).

The RNase H type-2 domain occupies Phe33–Ser224. Positions 39, 40, and 131 each coordinate a divalent metal cation.

Belongs to the RNase HII family. Requires Mn(2+) as cofactor. The cofactor is Mg(2+).

The protein localises to the cytoplasm. The catalysed reaction is Endonucleolytic cleavage to 5'-phosphomonoester.. Its function is as follows. Endonuclease that specifically degrades the RNA of RNA-DNA hybrids. In Bartonella tribocorum (strain CIP 105476 / IBS 506), this protein is Ribonuclease HII.